A 676-amino-acid chain; its full sequence is DNA ligase (676 aa).

Residues 35–39, 84–85, and E115 each bind NAD(+); these read DAVYD and SL. Residue K117 is the N6-AMP-lysine intermediate of the active site. The NAD(+) site is built by R138, E177, K296, and K320. Zn(2+)-binding residues include C414, C417, C432, and C437. Positions 599-676 constitute a BRCT domain; sequence NANLKLVGKT…SEAELLKILA (78 aa).

This sequence belongs to the NAD-dependent DNA ligase family. LigA subfamily. The cofactor is Mg(2+). Requires Mn(2+) as cofactor.

The catalysed reaction is NAD(+) + (deoxyribonucleotide)n-3'-hydroxyl + 5'-phospho-(deoxyribonucleotide)m = (deoxyribonucleotide)n+m + AMP + beta-nicotinamide D-nucleotide.. Its function is as follows. DNA ligase that catalyzes the formation of phosphodiester linkages between 5'-phosphoryl and 3'-hydroxyl groups in double-stranded DNA using NAD as a coenzyme and as the energy source for the reaction. It is essential for DNA replication and repair of damaged DNA. In Trichormus variabilis (strain ATCC 29413 / PCC 7937) (Anabaena variabilis), this protein is DNA ligase.